The chain runs to 493 residues: Cyclin-dependent kinase-like 2 (493 aa).

In terms of domain architecture, Protein kinase spans tyrosine 4 to phenylalanine 287. ATP contacts are provided by residues valine 10 to valine 18 and lysine 33. The [NKR]KIAxRE signature appears at lysine 45–glutamate 51. Residue aspartate 126 is the Proton acceptor of the active site. Residues glycine 363–serine 384 form a disordered region.

This sequence belongs to the protein kinase superfamily. CMGC Ser/Thr protein kinase family. CDC2/CDKX subfamily. As to expression, expressed in testis and kidney, and at lower level in brain and lung.

The protein localises to the cytoplasm. It localises to the nucleus. The catalysed reaction is L-seryl-[protein] + ATP = O-phospho-L-seryl-[protein] + ADP + H(+). The enzyme catalyses L-threonyl-[protein] + ATP = O-phospho-L-threonyl-[protein] + ADP + H(+). The polypeptide is Cyclin-dependent kinase-like 2 (Homo sapiens (Human)).